A 648-amino-acid chain; its full sequence is Cell surface glycoprotein MUC18 (648 aa).

The N-terminal stretch at 1 to 23 (MGLPKLVCVFLFAACCCCRRAAG) is a signal peptide. Ig-like V-type domains are found at residues 24 to 131 (VPGE…HYVE) and 141 to 244 (PTIQ…KEVT). At 24–563 (VPGEEKQPVP…LPQPESKGVV (540 aa)) the chain is on the extracellular side. Disulfide bonds link cysteine 50–cysteine 118, cysteine 163–cysteine 225, cysteine 274–cysteine 322, cysteine 367–cysteine 409, and cysteine 454–cysteine 501. A glycan (N-linked (GlcNAc...) asparagine) is linked at asparagine 58. Ig-like C2-type domains are found at residues 246-332 (PVFY…TTIT), 337-426 (PLEL…QLVS), and 432-512 (SPWM…SNTT). A disordered region spans residues 281-304 (QPHFTINKKDPSTGEMEEESTDEN). A glycan (N-linked (GlcNAc...) asparagine) is linked at asparagine 510. Over residues 532-549 (TGLSTLTVSPHTRANSTS) the composition is skewed to polar residues. The tract at residues 532–554 (TGLSTLTVSPHTRANSTSTEKKL) is disordered. The chain crosses the membrane as a helical span at residues 564–584 (IVAVIVCTLVLAVLGAALYFF). The Cytoplasmic portion of the chain corresponds to 585–648 (YKKGKLPCGR…QGEKYIDLRH (64 aa)). 2 positions are modified to phosphoserine: serine 608 and serine 616. The interval 625–648 (LLQGSNGDKRAPGDQGEKYIDLRH) is disordered. Residues 631–648 (GDKRAPGDQGEKYIDLRH) are compositionally biased toward basic and acidic residues.

As to expression, detected in melanoma cell lines.

The protein localises to the membrane. In terms of biological role, plays a role in cell adhesion, and in cohesion of the endothelial monolayer at intercellular junctions in vascular tissue. Its expression may allow melanoma cells to interact with cellular elements of the vascular system, thereby enhancing hematogeneous tumor spread. Could be an adhesion molecule active in neural crest cells during embryonic development. Acts as a surface receptor that triggers tyrosine phosphorylation of FYN and PTK2/FAK1, and a transient increase in the intracellular calcium concentration. This chain is Cell surface glycoprotein MUC18 (Mcam), found in Mus musculus (Mouse).